Reading from the N-terminus, the 260-residue chain is Shikimate dehydrogenase (260 aa).

K71 acts as the Proton acceptor in catalysis. 124 to 128 provides a ligand contact to NADP(+); it reads GAGGA.

The protein belongs to the shikimate dehydrogenase family.

It catalyses the reaction shikimate + NADP(+) = 3-dehydroshikimate + NADPH + H(+). It functions in the pathway metabolic intermediate biosynthesis; chorismate biosynthesis; chorismate from D-erythrose 4-phosphate and phosphoenolpyruvate: step 4/7. In Sulfurisphaera tokodaii (strain DSM 16993 / JCM 10545 / NBRC 100140 / 7) (Sulfolobus tokodaii), this protein is Shikimate dehydrogenase (aroE).